The primary structure comprises 60 residues: MKSVCGVLIILVVLTTMLSISTFSTVGAEGDCPISEAIKCVEKCKEKVEVCEPGVCKCSG.

A signal peptide spans 1 to 28 (MKSVCGVLIILVVLTTMLSISTFSTVGA). Cystine bridges form between cysteine 32–cysteine 51, cysteine 40–cysteine 56, and cysteine 44–cysteine 58.

The protein belongs to the short scorpion toxin superfamily. Potassium channel inhibitor family. Alpha-KTx 29 subfamily. Expressed by the venom gland.

Its subcellular location is the secreted. Its function is as follows. Weakly inhibits the Kv1.3/KCNA3 channel (1 uM of the toxin inhibits currents by 13.2%) and Kv7.1/KCNQ1 channel (10 uM of the toxin inhibits currents by 27.7%). The sequence is that of Potassium channel toxin alpha-KTx 29.1 from Lychas mucronatus (Chinese swimming scorpion).